The chain runs to 238 residues: MQTPHILIVEDELVTRNTLKSIFEAEGYDVFEATDGAEMHQILSEYDINLVIMDINLPGKNGLLLARELREQANVALMFLTGRDNEVDKILGLEIGADDYITKPFNPRELTIRARNLLSRTMNLGTVSEERRSVESYKFNGWELDINSRSLIGPDGEQYKLPRSEFRAMLHFCENPGKIQSRAELLKKMTGRELKPHDRTVDVTIRRIRKHFESTPDTPEIIATIHGEGYRFCGDLED.

Positions 5-118 (HILIVEDELV…ELTIRARNLL (114 aa)) constitute a Response regulatory domain. Asp-54 is modified (4-aspartylphosphate). The ompR/PhoB-type DNA-binding region spans 134–234 (VESYKFNGWE…IHGEGYRFCG (101 aa)).

Post-translationally, phosphorylated by ArcB.

Its subcellular location is the cytoplasm. Member of the two-component regulatory system ArcB/ArcA. Represses a wide variety of aerobic enzymes under anaerobic conditions. It may also be involved in the osmoregulation of envelope proteins. When activated by ArcB, it negatively regulates the expression of genes of aerobic function. Activates the transcription of the plfB operon by binding to its promoter. In Escherichia coli O157:H7, this protein is Aerobic respiration control protein ArcA (arcA).